Consider the following 426-residue polypeptide: Endothelin-1 receptor (426 aa).

Residues 1–20 form the signal peptide; that stretch reads METFCLKVTFWVALVGYVIG. The Extracellular segment spans residues 21–79; it reads DHPESYSTNLSTPVDFTTFHGTELSFLVTTHRPTNLALPSNGSMHSYCPQQTKITSAFK. Residues N29 and N61 are each glycosylated (N-linked (GlcNAc...) asparagine). A helical transmembrane segment spans residues 80 to 101; the sequence is YINTVISCTIFIVGMVGNATLL. At 102 to 111 the chain is on the cytoplasmic side; it reads RIIYQNKCMR. The chain crosses the membrane as a helical span at residues 112–131; the sequence is NGPNALIASLALGDLIYVVI. Residues 132-158 are Extracellular-facing; sequence DLPINVFKLLAGRWPFDHNDFGVFLCK. The cysteines at positions 157 and 238 are disulfide-linked. The helical transmembrane segment at 159–180 threads the bilayer; it reads LFPFLQKSSVGITVLNLCALSV. Residues 181-204 are Cytoplasmic-facing; the sequence is DRYRAVASWSRVQGIGIPLITAIE. A helical transmembrane segment spans residues 205-228; it reads IVSIWILSFILAIPEAIGFVMVPF. Over 229–255 the chain is Extracellular; it reads EYKGEQHKTCMLNATSKFMEFYQDVKD. N241 carries N-linked (GlcNAc...) asparagine glycosylation. Residues 256–277 traverse the membrane as a helical segment; it reads WWLFGFYFCMPLVCTAIFYTLM. Over 278 to 305 the chain is Cytoplasmic; it reads TCEMLNRRNGSLRIALSEHLKQRREVAK. Residues 306–327 form a helical membrane-spanning segment; the sequence is TVFCLVVIFALCWFPLHLSRIL. The Extracellular portion of the chain corresponds to 328-346; it reads KKTVYDEMDKNRCELLSFL. The chain crosses the membrane as a helical span at residues 347–371; it reads RLMDYIGINLATMNSCINPIALYFV. The Cytoplasmic segment spans residues 372-426; sequence SKKFKNCFQSCLCCCCYQSKSLMTSVPMNGTSIQWKNHEQNNHNTERSSHKDSIN. Residue S424 is modified to Phosphoserine.

Belongs to the G-protein coupled receptor 1 family. Endothelin receptor subfamily. EDNRA sub-subfamily. Interacts with HDAC7 and KAT5.

The protein resides in the cell membrane. Functionally, receptor for endothelin-1. Mediates its action by association with G proteins that activate a phosphatidylinositol-calcium second messenger system. The rank order of binding affinities for ET-A is: ET1 &gt; ET2 &gt;&gt; ET3. This is Endothelin-1 receptor from Canis lupus familiaris (Dog).